A 109-amino-acid chain; its full sequence is Short-chain dehydrogenase/reductase homolog YusS (109 aa).

It belongs to the short-chain dehydrogenases/reductases (SDR) family.

This Bacillus subtilis (strain 168) protein is Short-chain dehydrogenase/reductase homolog YusS (yusS).